Reading from the N-terminus, the 203-residue chain is MPHTLPALPYAYDALEPHIDAQTMEIHHTKHHQTYVNGLNAAIEGTEWAEWPVEKLVGAVKQLPESLRGAVTNHGGGHANHSLFWTVMSPQGGGEPHGQLAQAIASQLGGFDAFKEAFTKAALTRFGSGWAWLSVTPQKTLVVESSGNQDSPLMFGNTPIFGLDVWEHAYYLKYQNRRPEYIGAFYNVIDWAEVERRYLEALK.

Mn(2+) contacts are provided by H27, H81, D164, and H168.

This sequence belongs to the iron/manganese superoxide dismutase family. As to quaternary structure, homodimer. Requires Mn(2+) as cofactor.

It catalyses the reaction 2 superoxide + 2 H(+) = H2O2 + O2. Destroys superoxide anion radicals which are normally produced within the cells and which are toxic to biological systems. This Pseudomonas putida (Arthrobacter siderocapsulatus) protein is Superoxide dismutase [Mn] (sodA).